The following is a 355-amino-acid chain: Peptide chain release factor 1 (355 aa).

Gln-231 is subject to N5-methylglutamine.

It belongs to the prokaryotic/mitochondrial release factor family. Methylated by PrmC. Methylation increases the termination efficiency of RF1.

It is found in the cytoplasm. In terms of biological role, peptide chain release factor 1 directs the termination of translation in response to the peptide chain termination codons UAG and UAA. This chain is Peptide chain release factor 1, found in Aliarcobacter butzleri (strain RM4018) (Arcobacter butzleri).